A 159-amino-acid polypeptide reads, in one-letter code: Olfactory receptor-like protein COR8 (159 aa).

Residues 1 to 16 are Cytoplasmic-facing; it reads VAICNPLLYTISMPKS. Residues 17–41 form a helical membrane-spanning segment; the sequence is LCMKLVAGSYLGGVLNSLTQTCCLL. Residues 42 to 82 lie on the Extracellular side of the membrane; it reads PLPFCGPNVINHYFCDTNPLLKLTCSDGRLNELLLVTFNGT. Residue Asn80 is glycosylated (N-linked (GlcNAc...) asparagine). A helical transmembrane segment spans residues 83-103; sequence ISMTVLLIIVISYVYILVSIL. The Cytoplasmic portion of the chain corresponds to 104-116; that stretch reads SIRSARGRHKAFS. Residues 117 to 137 traverse the membrane as a helical segment; the sequence is TCASHLLTVTLFYVPAGLSHM. At 138 to 148 the chain is on the extracellular side; sequence QPGSKYSLDME. A helical transmembrane segment spans residues 149 to 159; the sequence is KVTAVFYTLLV.

The protein belongs to the G-protein coupled receptor 1 family.

Its subcellular location is the cell membrane. In terms of biological role, odorant receptor. In Gallus gallus (Chicken), this protein is Olfactory receptor-like protein COR8 (COR8).